Reading from the N-terminus, the 537-residue chain is Chaperonin GroEL (537 aa).

Residues 29–32 (TLGP), 86–90 (DGTTT), G413, 477–479 (NAA), and D493 each bind ATP.

This sequence belongs to the chaperonin (HSP60) family. Forms a cylinder of 14 subunits composed of two heptameric rings stacked back-to-back. Interacts with the co-chaperonin GroES.

The protein localises to the cytoplasm. The catalysed reaction is ATP + H2O + a folded polypeptide = ADP + phosphate + an unfolded polypeptide.. Together with its co-chaperonin GroES, plays an essential role in assisting protein folding. The GroEL-GroES system forms a nano-cage that allows encapsulation of the non-native substrate proteins and provides a physical environment optimized to promote and accelerate protein folding. The sequence is that of Chaperonin GroEL from Lactobacillus delbrueckii subsp. bulgaricus (strain ATCC 11842 / DSM 20081 / BCRC 10696 / JCM 1002 / NBRC 13953 / NCIMB 11778 / NCTC 12712 / WDCM 00102 / Lb 14).